Reading from the N-terminus, the 262-residue chain is MVALDNSEGGPEATPSGETRLSLPGCLPPLSGSQVKRVSASRRKQHFINQAVRNSDLVPRAKGRKSLQRLENTQYLLTLLETAGGPPGVEDGDLTPAAPGIFAEACSNATYVEVWNDFMNRSGEEQERVLRYLEDESQGKRRRGPGRGEDRRREDPVFTPHECFRRISRRLRSVLKRSRIPMETLESWEERLLAFFSVSPQAVYTAMLDNSYERLLLHAVCQYMDLISASADLEGRRQMKVSNRHLDFLPPELLLSAYLDQQ.

Disordered regions lie at residues 1–27 (MVALDNSEGGPEATPSGETRLSLPGCL) and 132–155 (YLEDESQGKRRRGPGRGEDRRRED). Positions 146–155 (GRGEDRRRED) are enriched in basic and acidic residues. The R3H domain maps to 182–245 (METLESWEER…RRQMKVSNRH (64 aa)).

The protein localises to the nucleus. The chain is R3H domain-containing protein 4 (R3hdm4) from Mus musculus (Mouse).